A 206-amino-acid chain; its full sequence is Transmembrane emp24 domain-containing protein bai (206 aa).

Residues 1–20 (MARAALIVCLLMACAWSSHA) form the signal peptide. The Lumenal segment spans residues 21 to 172 (VMFKLSPNTQ…RDTNEKTNSR (152 aa)). The 111-residue stretch at 30 to 140 (QKCLKEDIQA…LKPLEVDLKR (111 aa)) folds into the GOLD domain. Residues 173-193 (VLFFSIFSMCCLLGLATWQVL) form a helical membrane-spanning segment. The Cytoplasmic portion of the chain corresponds to 194–206 (YLRRYFKAKKLIE).

Belongs to the EMP24/GP25L family.

It is found in the membrane. Functionally, eca and bai are essential, though not redundant, for dorsoventral patterning of the embryo. Specifically required during early embryogenesis for the activity of maternal tkv, while the zygotic tkv is not affected. The protein is Transmembrane emp24 domain-containing protein bai of Drosophila erecta (Fruit fly).